The chain runs to 389 residues: Methane monooxygenase component A beta chain (389 aa).

As to quaternary structure, m.capsulatus has two forms of methane monooxygenase, a soluble and a membrane-bound type. The soluble type consists of four components (A to D): protein A, comprising three chains, in an alpha-2, beta-2, gamma-2 configuration, is a nonheme iron protein containing an unusual mu-hydroxo bridge structure at its active site and interacts with both oxygen and methane.

The enzyme catalyses methane + NADH + O2 + H(+) = methanol + NAD(+) + H2O. It catalyses the reaction methane + NADPH + O2 + H(+) = methanol + NADP(+) + H2O. Its function is as follows. Responsible for the initial oxygenation of methane to methanol in methanotrophs. It also catalyzes the monohydroxylation of a variety of unactivated alkenes, alicyclic, aromatic and heterocyclic compounds. This is Methane monooxygenase component A beta chain (mmoY) from Methylococcus capsulatus (strain ATCC 33009 / NCIMB 11132 / Bath).